The following is a 121-amino-acid chain: Protein TusC (121 aa).

Belongs to the DsrF/TusC family. In terms of assembly, heterohexamer, formed by a dimer of trimers. The hexameric TusBCD complex contains 2 copies each of TusB, TusC and TusD. The TusBCD complex interacts with TusE.

The protein localises to the cytoplasm. Part of a sulfur-relay system required for 2-thiolation of 5-methylaminomethyl-2-thiouridine (mnm(5)s(2)U) at tRNA wobble positions. This Yersinia pestis bv. Antiqua (strain Antiqua) protein is Protein TusC.